The primary structure comprises 424 residues: UPF0761 membrane protein Smlt0865 (424 aa).

6 helical membrane passes run 48 to 68 (VFAL…FPVF), 101 to 121 (SAGQ…LITL), 144 to 164 (FLVY…SLAV), 181 to 201 (WLAE…CITL), 216 to 236 (AVPG…GIGA), and 251 to 271 (VAFV…VLLG).

The protein belongs to the UPF0761 family.

It is found in the cell inner membrane. The sequence is that of UPF0761 membrane protein Smlt0865 from Stenotrophomonas maltophilia (strain K279a).